A 209-amino-acid polypeptide reads, in one-letter code: Large ribosomal subunit protein bL25 (209 aa).

Disordered regions lie at residues 1–20 (MSKS…KGSS) and 190–209 (LDVS…TQTS). Positions 8–20 (KAEKRERVGKGSS) are enriched in basic and acidic residues. Over residues 192-209 (VSDETSEQEKDEGETQTS) the composition is skewed to acidic residues.

The protein belongs to the bacterial ribosomal protein bL25 family. CTC subfamily. As to quaternary structure, part of the 50S ribosomal subunit; part of the 5S rRNA/L5/L18/L25 subcomplex. Contacts the 5S rRNA. Binds to the 5S rRNA independently of L5 and L18.

This is one of the proteins that binds to the 5S RNA in the ribosome where it forms part of the central protuberance. In Bartonella tribocorum (strain CIP 105476 / IBS 506), this protein is Large ribosomal subunit protein bL25.